A 235-amino-acid polypeptide reads, in one-letter code: Putative N-acetylmannosamine-6-phosphate 2-epimerase (235 aa).

The protein belongs to the NanE family.

The enzyme catalyses an N-acyl-D-glucosamine 6-phosphate = an N-acyl-D-mannosamine 6-phosphate. It functions in the pathway amino-sugar metabolism; N-acetylneuraminate degradation; D-fructose 6-phosphate from N-acetylneuraminate: step 3/5. Its function is as follows. Converts N-acetylmannosamine-6-phosphate (ManNAc-6-P) to N-acetylglucosamine-6-phosphate (GlcNAc-6-P). The polypeptide is Putative N-acetylmannosamine-6-phosphate 2-epimerase (Aliivibrio fischeri (strain ATCC 700601 / ES114) (Vibrio fischeri)).